Consider the following 206-residue polypeptide: Protein GrpE (206 aa).

Over residues methionine 1–valine 18 the composition is skewed to basic and acidic residues. The segment at methionine 1–alanine 21 is disordered.

Belongs to the GrpE family. Homodimer.

It is found in the cytoplasm. Functionally, participates actively in the response to hyperosmotic and heat shock by preventing the aggregation of stress-denatured proteins, in association with DnaK and GrpE. It is the nucleotide exchange factor for DnaK and may function as a thermosensor. Unfolded proteins bind initially to DnaJ; upon interaction with the DnaJ-bound protein, DnaK hydrolyzes its bound ATP, resulting in the formation of a stable complex. GrpE releases ADP from DnaK; ATP binding to DnaK triggers the release of the substrate protein, thus completing the reaction cycle. Several rounds of ATP-dependent interactions between DnaJ, DnaK and GrpE are required for fully efficient folding. This chain is Protein GrpE, found in Photobacterium profundum (strain SS9).